We begin with the raw amino-acid sequence, 824 residues long: Glycogen phosphorylase (824 aa).

The residue at position 667 (Lys667) is an N6-(pyridoxal phosphate)lysine.

It belongs to the glycogen phosphorylase family. The cofactor is pyridoxal 5'-phosphate.

The enzyme catalyses [(1-&gt;4)-alpha-D-glucosyl](n) + phosphate = [(1-&gt;4)-alpha-D-glucosyl](n-1) + alpha-D-glucose 1-phosphate. Functionally, phosphorylase is an important allosteric enzyme in carbohydrate metabolism. Enzymes from different sources differ in their regulatory mechanisms and in their natural substrates. However, all known phosphorylases share catalytic and structural properties. The protein is Glycogen phosphorylase (glgP) of Chlamydia pneumoniae (Chlamydophila pneumoniae).